A 126-amino-acid polypeptide reads, in one-letter code: UPF0102 protein Cphamn1_0017 (126 aa).

The protein belongs to the UPF0102 family.

This is UPF0102 protein Cphamn1_0017 from Chlorobium phaeobacteroides (strain BS1).